We begin with the raw amino-acid sequence, 111 residues long: Universal stress protein B (111 aa).

2 helical membrane passes run 1–21 (MISTVALFWALCVVCIVNMAR) and 90–110 (FILTSALCGLVVVSLIALMIW).

The protein belongs to the universal stress protein B family.

The protein localises to the cell inner membrane. This chain is Universal stress protein B, found in Escherichia coli O45:K1 (strain S88 / ExPEC).